A 348-amino-acid chain; its full sequence is Dihydroorotase (348 aa).

H17 and H19 together coordinate Zn(2+). Substrate is bound by residues 19 to 21 (HLR) and N45. Residues K103, H140, and H178 each contribute to the Zn(2+) site. K103 is subject to N6-carboxylysine. Position 140 (H140) interacts with substrate. L223 provides a ligand contact to substrate. Position 251 (D251) interacts with Zn(2+). The active site involves D251. Residues H255 and A267 each contribute to the substrate site.

Belongs to the metallo-dependent hydrolases superfamily. DHOase family. Class II DHOase subfamily. Homodimer. The cofactor is Zn(2+).

The catalysed reaction is (S)-dihydroorotate + H2O = N-carbamoyl-L-aspartate + H(+). The protein operates within pyrimidine metabolism; UMP biosynthesis via de novo pathway; (S)-dihydroorotate from bicarbonate: step 3/3. In terms of biological role, catalyzes the reversible cyclization of carbamoyl aspartate to dihydroorotate. In Yersinia pseudotuberculosis serotype O:1b (strain IP 31758), this protein is Dihydroorotase.